We begin with the raw amino-acid sequence, 591 residues long: Aspartate--tRNA(Asp/Asn) ligase (591 aa).

Glu174 provides a ligand contact to L-aspartate. The tract at residues 198 to 201 (QLFK) is aspartate. Arg220 is an L-aspartate binding site. Residues 220 to 222 (RDE) and Gln229 contribute to the ATP site. His450 contributes to the L-aspartate binding site. Glu483 contributes to the ATP binding site. Position 490 (Arg490) interacts with L-aspartate. Residue 535-538 (GLDR) coordinates ATP.

Belongs to the class-II aminoacyl-tRNA synthetase family. Type 1 subfamily. Homodimer.

It is found in the cytoplasm. The catalysed reaction is tRNA(Asx) + L-aspartate + ATP = L-aspartyl-tRNA(Asx) + AMP + diphosphate. Functionally, aspartyl-tRNA synthetase with relaxed tRNA specificity since it is able to aspartylate not only its cognate tRNA(Asp) but also tRNA(Asn). Reaction proceeds in two steps: L-aspartate is first activated by ATP to form Asp-AMP and then transferred to the acceptor end of tRNA(Asp/Asn). This is Aspartate--tRNA(Asp/Asn) ligase from Pseudomonas fluorescens (strain Pf0-1).